Here is a 946-residue protein sequence, read N- to C-terminus: Clumping factor A (946 aa).

An N-terminal signal peptide occupies residues 1 to 39 (MNMKKKEKHAIRKKSIGVASVLVGTLIGFGLLSSKEADA). The YSIRK-G/S signaling motif motif lies at 9 to 20 (HAIRKKSIGVAS). 2 disordered regions span residues 34–199 (SKEA…SNKD) and 528–917 (FNNG…SEDE). The interval 40-542 (SENSVTQSDS…GSGDGIDKPV (503 aa)) is ligand binding A region. A compositionally biased stretch (low complexity) spans 47 to 65 (SDSASNESKSNDSSSVSAA). Positions 71 to 111 (TNVSDTKTSSNTNNGETSVAQNPAQQETTQSALTNATTEET) are enriched in polar residues. Low complexity-rich tracts occupy residues 117-131 (ATTA…ATTQ) and 142-161 (NQTS…SVNS). Residues 162–199 (PQNSTNAENVSTTQDTSTEATPSNNESAPQSTDASNKD) are compositionally biased toward polar residues. The span at 546-564 (QPDEPGEIEPIPEDSDSDP) shows a compositional bias: acidic residues. Residues 565-597 (GSDSGSDSNSDSGSDSGSDSTSDSGSDSASDSD) are compositionally biased toward low complexity. Acidic residues predominate over residues 598–874 (SASDSDSASD…DSDSESDSNS (277 aa)). The span at 875–893 (DSESGSNNNVVPPNSPKNG) shows a compositional bias: low complexity. A compositionally biased stretch (basic and acidic residues) spans 900 to 909 (NEAKDSKEPL). An LPXTG sorting signal motif is present at residues 909–913 (LPDTG). Residue threonine 912 is modified to Pentaglycyl murein peptidoglycan amidated threonine. Positions 913-946 (GSEDEANTSLIWGLLASIGSLLLFRRKKENKDKK) are cleaved as a propeptide — removed by sortase.

Belongs to the serine-aspartate repeat-containing protein (SDr) family.

It is found in the secreted. The protein resides in the cell wall. In terms of biological role, cell surface-associated protein implicated in virulence. Promotes bacterial attachment exclusively to the gamma-chain of human fibrinogen. Induces formation of bacterial clumps. This chain is Clumping factor A (clfA), found in Staphylococcus aureus (strain MW2).